Consider the following 186-residue polypeptide: Holliday junction branch migration complex subunit RuvA (186 aa).

The segment at 1 to 63 (MNDYINGFLY…DNHFKYYGFF (63 aa)) is domain I. Residues 64–137 (NQLVRDLFEI…QKELFNNKIS (74 aa)) are domain II. Position 137 (serine 137) is a region of interest, flexible linker. The segment at 137 to 186 (SEKKNKVITSLEKLGYKTKDIYKIIINVDEDLTIDELTKYVLEKLSYINN) is domain III.

This sequence belongs to the RuvA family. As to quaternary structure, homotetramer. Forms an RuvA(8)-RuvB(12)-Holliday junction (HJ) complex. HJ DNA is sandwiched between 2 RuvA tetramers; dsDNA enters through RuvA and exits via RuvB. An RuvB hexamer assembles on each DNA strand where it exits the tetramer. Each RuvB hexamer is contacted by two RuvA subunits (via domain III) on 2 adjacent RuvB subunits; this complex drives branch migration. In the full resolvosome a probable DNA-RuvA(4)-RuvB(12)-RuvC(2) complex forms which resolves the HJ.

It localises to the cytoplasm. The RuvA-RuvB-RuvC complex processes Holliday junction (HJ) DNA during genetic recombination and DNA repair, while the RuvA-RuvB complex plays an important role in the rescue of blocked DNA replication forks via replication fork reversal (RFR). RuvA specifically binds to HJ cruciform DNA, conferring on it an open structure. The RuvB hexamer acts as an ATP-dependent pump, pulling dsDNA into and through the RuvAB complex. HJ branch migration allows RuvC to scan DNA until it finds its consensus sequence, where it cleaves and resolves the cruciform DNA. The protein is Holliday junction branch migration complex subunit RuvA of Mycoplasma capricolum subsp. capricolum (strain California kid / ATCC 27343 / NCTC 10154).